Here is a 161-residue protein sequence, read N- to C-terminus: UPF0303 protein Spro_1996 (161 aa).

The protein belongs to the UPF0303 family.

The polypeptide is UPF0303 protein Spro_1996 (Serratia proteamaculans (strain 568)).